The following is a 79-amino-acid chain: Protein VdcD (79 aa).

Involved in the non-oxidative decarboxylation and detoxification of phenolic derivatives under both aerobic and anaerobic conditions, however the precise biochemical function of VdcD in metabolism of phenolic acid is unknown. The polypeptide is Protein VdcD (Streptomyces sp. (strain D7)).